Reading from the N-terminus, the 521-residue chain is 2,3-bisphosphoglycerate-independent phosphoglycerate mutase 2 (521 aa).

The Mn(2+) site is built by aspartate 20 and serine 70. The active-site Phosphoserine intermediate is serine 70. Residues histidine 131, 161–162, arginine 193, arginine 199, 270–273, and lysine 343 contribute to the substrate site; these read RD and RPDR. 5 residues coordinate Mn(2+): aspartate 410, histidine 414, aspartate 451, histidine 452, and histidine 470.

It belongs to the BPG-independent phosphoglycerate mutase family. It depends on Mn(2+) as a cofactor.

The catalysed reaction is (2R)-2-phosphoglycerate = (2R)-3-phosphoglycerate. The protein operates within carbohydrate degradation; glycolysis; pyruvate from D-glyceraldehyde 3-phosphate: step 3/5. Functionally, catalyzes the interconversion of 2-phosphoglycerate and 3-phosphoglycerate. In Methanosarcina acetivorans (strain ATCC 35395 / DSM 2834 / JCM 12185 / C2A), this protein is 2,3-bisphosphoglycerate-independent phosphoglycerate mutase 2.